The sequence spans 223 residues: Transmembrane protein 114 (223 aa).

A helical transmembrane segment spans residues 7–27 (GLAGAAALTGALSFVLLAAAI). N-linked (GlcNAc...) asparagine glycans are attached at residues N55 and N89. Helical transmembrane passes span 106-126 (FVILLPLSLILMVFGGMTGFL), 134-154 (LLLLLTGILFLFGAMVTLAGI), and 189-209 (LALGWISFIAELLTGAAFLAA).

Belongs to the PMP-22/EMP/MP20 family.

The protein resides in the cell junction. It is found in the tight junction. It localises to the lateral cell membrane. Its subcellular location is the apical cell membrane. The protein is Transmembrane protein 114 of Homo sapiens (Human).